The following is a 208-amino-acid chain: Proteasome subunit beta 2 (208 aa).

Residues 1-9 constitute a propeptide, removed in mature form; by autocatalysis; it reads MSGKKIVSK. Residue threonine 10 is the Nucleophile of the active site.

This sequence belongs to the peptidase T1B family. The 20S proteasome core is composed of 14 alpha and 14 beta subunits that assemble into four stacked heptameric rings, resulting in a barrel-shaped structure. The two inner rings, each composed of seven catalytic beta subunits, are sandwiched by two outer rings, each composed of seven alpha subunits. The catalytic chamber with the active sites is on the inside of the barrel. Has a gated structure, the ends of the cylinder being occluded by the N-termini of the alpha-subunits. Is capped at one or both ends by the proteasome regulatory ATPase, PAN.

The protein localises to the cytoplasm. The catalysed reaction is Cleavage of peptide bonds with very broad specificity.. The formation of the proteasomal ATPase PAN-20S proteasome complex, via the docking of the C-termini of PAN into the intersubunit pockets in the alpha-rings, triggers opening of the gate for substrate entry. Interconversion between the open-gate and close-gate conformations leads to a dynamic regulation of the 20S proteasome proteolysis activity. Its function is as follows. Component of the proteasome core, a large protease complex with broad specificity involved in protein degradation. This is Proteasome subunit beta 2 from Staphylothermus marinus (strain ATCC 43588 / DSM 3639 / JCM 9404 / F1).